Consider the following 179-residue polypeptide: Large ribosomal subunit protein uL6 (179 aa).

Belongs to the universal ribosomal protein uL6 family. As to quaternary structure, part of the 50S ribosomal subunit.

In terms of biological role, this protein binds to the 23S rRNA, and is important in its secondary structure. It is located near the subunit interface in the base of the L7/L12 stalk, and near the tRNA binding site of the peptidyltransferase center. The polypeptide is Large ribosomal subunit protein uL6 (Leptospira borgpetersenii serovar Hardjo-bovis (strain JB197)).